A 44-amino-acid chain; its full sequence is Photosystem I reaction center subunit IX (44 aa).

A helical transmembrane segment spans residues 7-27 (YLSVAPVLSTLSLGFFAGFLI).

This sequence belongs to the PsaJ family.

It is found in the plastid membrane. Its function is as follows. May help in the organization of the PsaE and PsaF subunits. The chain is Photosystem I reaction center subunit IX from Cuscuta obtusiflora (Peruvian dodder).